We begin with the raw amino-acid sequence, 390 residues long: uncharacterized protein (390 aa).

This is an uncharacterized protein from Orgyia pseudotsugata multicapsid polyhedrosis virus (OpMNPV).